Reading from the N-terminus, the 219-residue chain is Ribose-5-phosphate isomerase A (219 aa).

Residues 28 to 31 (TGST), 81 to 84 (DGAD), and 94 to 97 (KGGG) each bind substrate. E103 (proton acceptor) is an active-site residue. K121 lines the substrate pocket.

It belongs to the ribose 5-phosphate isomerase family. In terms of assembly, homodimer.

It catalyses the reaction aldehydo-D-ribose 5-phosphate = D-ribulose 5-phosphate. It participates in carbohydrate degradation; pentose phosphate pathway; D-ribose 5-phosphate from D-ribulose 5-phosphate (non-oxidative stage): step 1/1. Its function is as follows. Catalyzes the reversible conversion of ribose-5-phosphate to ribulose 5-phosphate. The polypeptide is Ribose-5-phosphate isomerase A (Shewanella sp. (strain MR-4)).